A 355-amino-acid polypeptide reads, in one-letter code: Chorismate synthase (355 aa).

NADP(+) contacts are provided by Arg44 and Arg49. FMN contacts are provided by residues 121–123 (HFS), Gly277, 292–296 (KPTPS), and Arg319.

Belongs to the chorismate synthase family. Requires FMNH2 as cofactor.

The catalysed reaction is 5-O-(1-carboxyvinyl)-3-phosphoshikimate = chorismate + phosphate. It participates in metabolic intermediate biosynthesis; chorismate biosynthesis; chorismate from D-erythrose 4-phosphate and phosphoenolpyruvate: step 7/7. Its function is as follows. Catalyzes the anti-1,4-elimination of the C-3 phosphate and the C-6 proR hydrogen from 5-enolpyruvylshikimate-3-phosphate (EPSP) to yield chorismate, which is the branch point compound that serves as the starting substrate for the three terminal pathways of aromatic amino acid biosynthesis. This reaction introduces a second double bond into the aromatic ring system. This Thermococcus kodakarensis (strain ATCC BAA-918 / JCM 12380 / KOD1) (Pyrococcus kodakaraensis (strain KOD1)) protein is Chorismate synthase.